A 411-amino-acid polypeptide reads, in one-letter code: UPF0761 membrane protein PA14_51960 (411 aa).

6 helical membrane passes run 36–56 (LFAVVPMMTVMFSMLSLIPAF), 92–112 (HLTWVGVVFLAVTAFTMLVTI), 132–152 (FLLYWAILSLGPLLLGAGFAV), 174–194 (LLGLMPLAFSVAAFTLLYSAV), 207–229 (GGVFTAVLFEAAKTLFGLYVSLF), and 244–264 (IFLLWIYLSWMIVLFGAVLVC).

The protein belongs to the UPF0761 family.

It is found in the cell inner membrane. The polypeptide is UPF0761 membrane protein PA14_51960 (Pseudomonas aeruginosa (strain UCBPP-PA14)).